Consider the following 181-residue polypeptide: Ribulose bisphosphate carboxylase small subunit, chloroplastic (181 aa).

The N-terminal 56 residues, 1-56 (MASISSSAIATVNRTTSTQASLAAPFTGLKSNVAFPVTKKANNDFSSLPSNGGRVQ), are a transit peptide targeting the chloroplast.

It belongs to the RuBisCO small chain family. Heterohexadecamer of 8 large and 8 small subunits.

The protein resides in the plastid. Its subcellular location is the chloroplast. Its function is as follows. RuBisCO catalyzes two reactions: the carboxylation of D-ribulose 1,5-bisphosphate, the primary event in carbon dioxide fixation, as well as the oxidative fragmentation of the pentose substrate. Both reactions occur simultaneously and in competition at the same active site. Although the small subunit is not catalytic it is essential for maximal activity. In Lactuca sativa (Garden lettuce), this protein is Ribulose bisphosphate carboxylase small subunit, chloroplastic.